A 197-amino-acid chain; its full sequence is uncharacterized protein (197 aa).

The signal sequence occupies residues 1 to 30; sequence MSTYIIINIALLIAIVALIFFLSKKTKSEA.

This is an uncharacterized protein from Acanthamoeba polyphaga (Amoeba).